Here is a 408-residue protein sequence, read N- to C-terminus: DNA replication and repair protein RecF (408 aa).

30–37 (GSNGQGKT) is an ATP binding site. Disordered stretches follow at residues 220-252 (DHGP…DGGR) and 389-408 (SPTP…GGAA). Residues 389–402 (SPTPASASEPASPG) are compositionally biased toward low complexity.

It belongs to the RecF family.

Its subcellular location is the cytoplasm. In terms of biological role, the RecF protein is involved in DNA metabolism; it is required for DNA replication and normal SOS inducibility. RecF binds preferentially to single-stranded, linear DNA. It also seems to bind ATP. In Clavibacter sepedonicus (Clavibacter michiganensis subsp. sepedonicus), this protein is DNA replication and repair protein RecF.